The chain runs to 286 residues: MFAEQQREYLDKGYTKIESFFSAEEVAKILEDVKQIELGAIGVASDNETYQFEKKNGETTKLLRRVENPHLYFDAIDSLVRSEKIVDLLRHFLGENIRLHNSKINFKPPSGAPVQWHQDWAFYPHTNDDFLTLGIFLDETSEKNGAMACLPGSHKGKVYDHRNVETGEFCHAISRSNWDEALDPTEGELLTGPVGTVTLHHVRTLHGSGPNHSTIRRRFLLIGYAAADAWPLLGCGNYGDYESLMVSGRSTVFPRMVELPLTVPYPLSMYGDRIFESQRALTQKYY.

This sequence belongs to the PhyH family.

Required for hypophosphite oxidation. This is Probable alpha-ketoglutarate-dependent hypophosphite dioxygenase (htxA) from Stutzerimonas stutzeri (Pseudomonas stutzeri).